The primary structure comprises 867 residues: Leucine--tRNA ligase (867 aa).

The 'HIGH' region motif lies at 40–51; the sequence is PYPSGAGLHVGH. The 'KMSKS' region signature appears at 638–642; sequence KMSKS. Lys641 provides a ligand contact to ATP.

Belongs to the class-I aminoacyl-tRNA synthetase family.

The protein resides in the cytoplasm. The catalysed reaction is tRNA(Leu) + L-leucine + ATP = L-leucyl-tRNA(Leu) + AMP + diphosphate. The sequence is that of Leucine--tRNA ligase from Leptospira biflexa serovar Patoc (strain Patoc 1 / Ames).